Reading from the N-terminus, the 675-residue chain is Zeaxanthin epoxidase, chloroplastic (675 aa).

The transit peptide at 1–25 directs the protein to the chloroplast; it reads MASTVLYNSLTTSTTVFLRSHLPIS. Residues 92-120 and 370-383 each bind FAD; these read RILVAGGGIGGLVFALAAKKRGFDVKVFE and KLTWGQGRVTLLGD. Positions 558–622 constitute an FHA domain; that stretch reads ICLSRKEDEP…HGTWITDNEG (65 aa).

It depends on FAD as a cofactor.

The protein resides in the plastid. It is found in the chloroplast thylakoid membrane. It catalyses the reaction all-trans-zeaxanthin + 4 reduced [2Fe-2S]-[ferredoxin] + 2 O2 + 4 H(+) = all-trans-violaxanthin + 4 oxidized [2Fe-2S]-[ferredoxin] + 2 H2O. It participates in plant hormone biosynthesis; abscisate biosynthesis. Inhibited by diphenyleneiodonium (DPI). In terms of biological role, converts zeaxanthin into antheraxanthin and subsequently violaxanthin. Involved in the epoxidation of zeaxanthin. This chain is Zeaxanthin epoxidase, chloroplastic, found in Spinacia oleracea (Spinach).